An 872-amino-acid polypeptide reads, in one-letter code: Armadillo repeat-containing protein 3 (872 aa).

12 ARM repeats span residues 15-54, 57-96, 98-138, 140-179, 181-220, 222-262, 264-304, 306-345, 346-385, 388-427, 429-468, and 470-509; these read DVFDPLMIESKKAATVVLMLNSPEEEILAKACEAIYKFAL, EENKTTLLELGAVEPLTKLLTHEDKIVRRNATMIFGILAS, NDVK…NMSA, YTSKVQIFEHGGLEPLIRLLSSPDPDVKKNSMECIYNLVQ, FQCRAKLQELNAIPPILDLLKSEYPVIQLLALKTLGVIAN, KESR…NCLE, MDTM…KAAY, PENRKLFHEQEVEKCLVALLGSENDGTKIAASQAISAMCE, NSGSKDFFNNQGIPQLIQLLKSDNEEVREAAALALANLTT, PANANAAAEADGIDPLINLLSSKRDGAIANAATVLTNMAM, EPLRLNIQNHDIMHAIISPLRSANTVVQSKAALAVTATAC, and VEARTELRNSGGLEPLVELLRSKNDEVRKHASWAVMVCAG. S-palmitoyl cysteine attachment occurs at residues C507 and C518. The tract at residues 610–693 is disordered; that stretch reads VSPPSSMEDK…SKGKKEEEKV (84 aa). The span at 626–635 shows a compositional bias: low complexity; that stretch reads RSISSSSSLR. The span at 636-646 shows a compositional bias: basic residues; sequence RSSKEKNKKNS. The span at 675–693 shows a compositional bias: basic and acidic residues; that stretch reads ATKEKGWRKSKGKKEEEKV.

As to quaternary structure, homodimer. Interacts with PIK3C3, PIK3R4 and BECN1. Interacts (via ARM domains) with ATG14. In terms of processing, palmitoylation is important for its function in autophagy. Expressed in skeletal muscle, brain, lung, kidney, prostate and testis. As to expression, mainly expressed in skeletal muscle, liver, spleen and thymus. In terms of tissue distribution, expressed only in the testis among normal tissues but is expressed frequently in various cancer tissues and, particularly, in pancreatic, lung and endometrial cancers.

Its function is as follows. Essential for male fertility and sperm motility. During spermatogenesis, promotes the autophagic degradation of excessive ribosomes, providing energy resources for mitochondria and thus ensuring sperm flagellar motility. The sequence is that of Armadillo repeat-containing protein 3 (ARMC3) from Homo sapiens (Human).